Consider the following 394-residue polypeptide: Actin-related protein 2 (394 aa).

An N-acetylmethionine modification is found at Met1. ATP-binding positions include Gly160 to Gly162 and Arg214 to Glu218. Lys299 is subject to N6-acetyllysine. Gly305–Tyr310 provides a ligand contact to ATP. Lys322 bears the N6-acetyllysine mark.

The protein belongs to the actin family. ARP2 subfamily. As to quaternary structure, component of the Arp2/3 complex composed of ACTR2/ARP2, ACTR3/ARP3, ARPC1B/p41-ARC, ARPC2/p34-ARC, ARPC3/p21-ARC, ARPC4/p20-ARC and ARPC5/p16-ARC.

Its subcellular location is the cytoplasm. It localises to the cytoskeleton. It is found in the cell projection. The protein resides in the nucleus. In terms of biological role, ATP-binding component of the Arp2/3 complex, a multiprotein complex that mediates actin polymerization upon stimulation by nucleation-promoting factor (NPF). The Arp2/3 complex mediates the formation of branched actin networks in the cytoplasm, providing the force for cell motility. Seems to contact the pointed end of the daughter actin filament. In addition to its role in the cytoplasmic cytoskeleton, the Arp2/3 complex also promotes actin polymerization in the nucleus, thereby regulating gene transcription and repair of damaged DNA. The Arp2/3 complex promotes homologous recombination (HR) repair in response to DNA damage by promoting nuclear actin polymerization, leading to drive motility of double-strand breaks (DSBs). The polypeptide is Actin-related protein 2 (Actr2) (Rattus norvegicus (Rat)).